Reading from the N-terminus, the 185-residue chain is Large ribosomal subunit protein uL5 (185 aa).

It belongs to the universal ribosomal protein uL5 family. Part of the 50S ribosomal subunit; part of the 5S rRNA/L5/L18/L25 subcomplex. Contacts the 5S rRNA and the P site tRNA. Forms a bridge to the 30S subunit in the 70S ribosome.

In terms of biological role, this is one of the proteins that bind and probably mediate the attachment of the 5S RNA into the large ribosomal subunit, where it forms part of the central protuberance. In the 70S ribosome it contacts protein S13 of the 30S subunit (bridge B1b), connecting the 2 subunits; this bridge is implicated in subunit movement. Contacts the P site tRNA; the 5S rRNA and some of its associated proteins might help stabilize positioning of ribosome-bound tRNAs. This Brucella abortus (strain S19) protein is Large ribosomal subunit protein uL5.